The following is a 336-amino-acid chain: Ephrin-B2 (336 aa).

Positions 1–28 (MAMARSRRDSVWKYCWGLLMVLCRTAIS) are cleaved as a signal peptide. At 29 to 232 (RSIVLEPIYW…LLGSEVALFA (204 aa)) the chain is on the extracellular side. An Ephrin RBD domain is found at 31–167 (IVLEPIYWNS…TRAMKILMKV (137 aa)). Asparagine 39 carries an N-linked (GlcNAc...) asparagine glycan. Intrachain disulfides connect cysteine 65/cysteine 104 and cysteine 92/cysteine 156. An N-linked (GlcNAc...) asparagine glycan is attached at asparagine 142. Residues 170–216 (DASSAGSARNHGPTRRPELEAGTNGRSSTTSPFVKPNPGSSTDGNSA) are disordered. The span at 193-216 (NGRSSTTSPFVKPNPGSSTDGNSA) shows a compositional bias: polar residues. Residues 233 to 253 (GIASGCIIFIVIIITLVVLLL) traverse the membrane as a helical segment. At 254 to 336 (KYRRRHRKHS…QSPANIYYKV (83 aa)) the chain is on the cytoplasmic side. At serine 263 the chain carries Phosphoserine. Threonine 277 carries the post-translational modification Phosphothreonine. Arginine 280 carries the post-translational modification Omega-N-methylarginine. The PDZ-binding motif lies at 334–336 (YKV).

It belongs to the ephrin family. Interacts with PDZRN3. Binds to the ephrin receptor EPHA3, EPHA4 and EPHB4. In terms of processing, inducible phosphorylation of tyrosine residues in the cytoplasmic domain. In terms of tissue distribution, expressed in inner and outer pillar cells of the organ of Corti (at protein level). Expressed on lateral floor plate cells, specifically on commissural axon segments that have passed through the floor plate. Expressed in cells of the retinal ganglion cell layer during retinal axon guidance to the optic disk. Expressed in myogenic progenitor cells.

Its subcellular location is the cell membrane. The protein localises to the cell junction. The protein resides in the adherens junction. Functionally, cell surface transmembrane ligand for Eph receptors, a family of receptor tyrosine kinases which are crucial for migration, repulsion and adhesion during neuronal, vascular and epithelial development. Binds promiscuously Eph receptors residing on adjacent cells, leading to contact-dependent bidirectional signaling into neighboring cells. The signaling pathway downstream of the receptor is referred to as forward signaling while the signaling pathway downstream of the ephrin ligand is referred to as reverse signaling. Binds to receptor tyrosine kinase including EPHA4, EPHA3 and EPHB4. Together with EPHB4 plays a central role in heart morphogenesis and angiogenesis through regulation of cell adhesion and cell migration. EPHB4-mediated forward signaling controls cellular repulsion and segregation from EFNB2-expressing cells. May play a role in constraining the orientation of longitudinally projecting axons. The chain is Ephrin-B2 (Efnb2) from Mus musculus (Mouse).